Reading from the N-terminus, the 651-residue chain is E3 SUMO-protein ligase PIAS1 (651 aa).

Ala-2 bears the N-acetylalanine mark. Residues Ala-2–Leu-200 form a required for interaction with MSX1 region. Residues Val-11 to Leu-45 enclose the SAP domain. The short motif at Leu-19–Leu-23 is the LXXLL motif element. Glycyl lysine isopeptide (Lys-Gly) (interchain with G-Cter in SUMO2) cross-links involve residues Lys-40 and Lys-46. The Nuclear localization signal motif lies at Lys-56–Arg-64. In terms of domain architecture, PINIT spans His-124–Leu-288. Residues Lys-137 and Lys-238 each participate in a glycyl lysine isopeptide (Lys-Gly) (interchain with G-Cter in SUMO2) cross-link. Residues Pro-320 to Ile-405 form an SP-RING-type zinc finger. 4 residues coordinate Zn(2+): Cys-351, His-353, Cys-374, and Cys-377. Residues Lys-368 to Lys-380 carry the Nuclear localization signal motif. Lys-453 participates in a covalent cross-link: Glycyl lysine isopeptide (Lys-Gly) (interchain with G-Cter in SUMO2). An SUMO1-binding region spans residues Leu-462–Glu-473. Residues Asp-465 to Leu-511 form a disordered region. Ser-467, Ser-468, Ser-483, and Ser-485 each carry phosphoserine. Residues Pro-482–Ser-491 are compositionally biased toward low complexity. Phosphothreonine is present on Thr-487. A phosphoserine mark is found at Ser-488 and Ser-491. Lys-493 participates in a covalent cross-link: Glycyl lysine isopeptide (Lys-Gly) (interchain with G-Cter in SUMO2). Phosphoserine is present on residues Ser-503, Ser-510, and Ser-522. Tandem repeats lie at residues Asn-520 to Leu-523 and Asn-557 to Leu-560. A 4 X 4 AA repeats of N-T-S-L region spans residues Asn-520–Leu-615. One copy of the 3; approximate repeat lies at Ser-598 to Leu-601. The tract at residues Ser-600–Ala-630 is disordered. The segment covering Asn-605–Leu-621 has biased composition (low complexity). The stretch at Asn-612 to Leu-615 is one 4; approximate repeat.

It belongs to the PIAS family. As to quaternary structure, interacts with NR2C1; the interaction promotes its sumoylation. Interacts with DDX21, CSRP2, AXIN1, JUN, SATB2, PLAG1, TP53 and STAT1 (dimer), following IFNA1-stimulation. Interacts with SP3 (preferentially when SUMO-modified). Interacts with KLF8; the interaction results in SUMO ligation and repression of KLF8 transcriptional activity and of its cell cycle progression into G(1) phase. Interacts with CHUK/IKKA; this interaction induces PIAS1 phosphorylation. Interacts with PTK2/FAK1; the interaction promotes its sumoylation. Interacts with SUMO1, UBE2I, NCOA2 and AR. Interacts with NR2C1; the interaction promotes its sumoylation. Interacts with DDX5. Interacts with MTA1. Interacts with PML (isoform PML-12). Interacts with PRDM1. Interacts (via N-terminus) with MSX1 (via C-terminus); the interaction is required for the localization of both proteins to the nuclear periphery and specific binding of MSX1 to the core enhancer region in target gene promoters. Sumoylated. As to expression, expressed in kidney, heart, spleen, brain and cerebellum; weak expression, if any, in liver and lung.

The protein localises to the nucleus. The protein resides in the nucleus speckle. Its subcellular location is the PML body. It localises to the cytoplasm. It is found in the cytoskeleton. It carries out the reaction S-ubiquitinyl-[E2 ubiquitin-conjugating enzyme]-L-cysteine + [acceptor protein]-L-lysine = [E2 ubiquitin-conjugating enzyme]-L-cysteine + N(6)-ubiquitinyl-[acceptor protein]-L-lysine.. It participates in protein modification; protein sumoylation. Functions as an E3-type small ubiquitin-like modifier (SUMO) ligase, stabilizing the interaction between UBE2I and the substrate, and as a SUMO-tethering factor. Catalyzes sumoylation of various proteins, such as CEBPB, MRE11, MTA1, PTK2 and PML. Plays a crucial role as a transcriptional coregulation in various cellular pathways, including the STAT pathway, the p53 pathway and the steroid hormone signaling pathway. In vitro, binds A/T-rich DNA. The effects of this transcriptional coregulation, transactivation or silencing, may vary depending upon the biological context. Mediates sumoylation of MRE11, stabilizing MRE11 on chromatin during end resection. Sumoylates PML (at 'Lys-65' and 'Lys-160') and PML-RAR and promotes their ubiquitin-mediated degradation. PIAS1-mediated sumoylation of PML promotes its interaction with CSNK2A1/CK2 which in turn promotes PML phosphorylation and degradation. Enhances the sumoylation of MTA1 and may participate in its paralog-selective sumoylation. Plays a dynamic role in adipogenesis by promoting the SUMOylation and degradation of CEBPB. Mediates the nuclear mobility and localization of MSX1 to the nuclear periphery, whereby MSX1 is brought into the proximity of target myoblast differentiation factor genes. Also required for the binding of MSX1 to the core enhancer region in target gene promoter regions, independent of its sumoylation activity. Capable of binding to the core enhancer region TAAT box in the MYOD1 gene promoter. This Mus musculus (Mouse) protein is E3 SUMO-protein ligase PIAS1 (Pias1).